The sequence spans 282 residues: Heme oxygenase 1, chloroplastic (282 aa).

The transit peptide at 1 to 54 (MAYLAPISSSLSIFKNPQLSRFQFSSSSPNPLFLRPRIQILSMTMNKSPSLVVV) directs the protein to the chloroplast. Heme b is bound at residue H86.

It belongs to the heme oxygenase family. In terms of tissue distribution, widely expressed.

The protein localises to the plastid. It is found in the chloroplast. The enzyme catalyses heme b + 3 reduced [NADPH--hemoprotein reductase] + 3 O2 = biliverdin IXalpha + CO + Fe(2+) + 3 oxidized [NADPH--hemoprotein reductase] + 3 H2O + H(+). Activated by ascorbate. In terms of biological role, key enzyme in the synthesis of the chromophore of the phytochrome family of plant photoreceptors. Catalyzes the opening of the heme ring to form the open-chain tetrapyrrole biliverdin IX with the release of iron and carbon monoxide (CO). Produces specifically the biliverdin IX-alpha isomer. Can form complex with heme, is ferredoxin-dependent and its activity is increased in the presence of ascorbate. Plays a role in salt acclimation signaling. May affect the plastid-to-nucleus signaling pathway by perturbing tetrapyrrole synthesis. The plastid-to-nucleus signal plays an important role in the coordinated expression of both nuclear- and chloroplast-localized genes that encode photosynthesis-related proteins. The sequence is that of Heme oxygenase 1, chloroplastic (HO1) from Arabidopsis thaliana (Mouse-ear cress).